We begin with the raw amino-acid sequence, 310 residues long: Aspartate carbamoyltransferase catalytic subunit (310 aa).

Residues arginine 58 and threonine 59 each contribute to the carbamoyl phosphate site. Lysine 86 is a binding site for L-aspartate. Carbamoyl phosphate contacts are provided by arginine 108, histidine 136, and glutamine 139. L-aspartate is bound by residues arginine 169 and arginine 224. Carbamoyl phosphate contacts are provided by glycine 265 and proline 266.

This sequence belongs to the aspartate/ornithine carbamoyltransferase superfamily. ATCase family. In terms of assembly, heterododecamer (2C3:3R2) of six catalytic PyrB chains organized as two trimers (C3), and six regulatory PyrI chains organized as three dimers (R2).

The enzyme catalyses carbamoyl phosphate + L-aspartate = N-carbamoyl-L-aspartate + phosphate + H(+). Its pathway is pyrimidine metabolism; UMP biosynthesis via de novo pathway; (S)-dihydroorotate from bicarbonate: step 2/3. Its function is as follows. Catalyzes the condensation of carbamoyl phosphate and aspartate to form carbamoyl aspartate and inorganic phosphate, the committed step in the de novo pyrimidine nucleotide biosynthesis pathway. This is Aspartate carbamoyltransferase catalytic subunit from Trichlorobacter lovleyi (strain ATCC BAA-1151 / DSM 17278 / SZ) (Geobacter lovleyi).